A 183-amino-acid polypeptide reads, in one-letter code: Adenylate kinase (183 aa).

7-15 (GVAGVGKTT) lines the ATP pocket.

This sequence belongs to the archaeal adenylate kinase family.

It is found in the cytoplasm. The catalysed reaction is AMP + ATP = 2 ADP. The polypeptide is Adenylate kinase (adkA) (Thermoplasma acidophilum (strain ATCC 25905 / DSM 1728 / JCM 9062 / NBRC 15155 / AMRC-C165)).